A 310-amino-acid chain; its full sequence is N-acetylmuramic acid 6-phosphate etherase (310 aa).

The SIS domain maps to 64–227 (ITARLKSKGR…STSVMIKLGK (164 aa)). Glu92 (proton donor) is an active-site residue. Glu123 is an active-site residue.

This sequence belongs to the GCKR-like family. MurNAc-6-P etherase subfamily. As to quaternary structure, homodimer.

It catalyses the reaction N-acetyl-D-muramate 6-phosphate + H2O = N-acetyl-D-glucosamine 6-phosphate + (R)-lactate. The protein operates within amino-sugar metabolism; N-acetylmuramate degradation. Specifically catalyzes the cleavage of the D-lactyl ether substituent of MurNAc 6-phosphate, producing GlcNAc 6-phosphate and D-lactate. The protein is N-acetylmuramic acid 6-phosphate etherase of Prochlorococcus marinus (strain NATL1A).